A 69-amino-acid polypeptide reads, in one-letter code: MARVTVEDCLDHVDNRFELVMLASKRARQISQYGKDPKVEWENDKPTVVALREIAAGLITSEMLEQDED.

This sequence belongs to the RNA polymerase subunit omega family. As to quaternary structure, the RNAP catalytic core consists of 2 alpha, 1 beta, 1 beta' and 1 omega subunit. When a sigma factor is associated with the core the holoenzyme is formed, which can initiate transcription.

The enzyme catalyses RNA(n) + a ribonucleoside 5'-triphosphate = RNA(n+1) + diphosphate. In terms of biological role, promotes RNA polymerase assembly. Latches the N- and C-terminal regions of the beta' subunit thereby facilitating its interaction with the beta and alpha subunits. The sequence is that of DNA-directed RNA polymerase subunit omega from Hahella chejuensis (strain KCTC 2396).